Consider the following 335-residue polypeptide: Biotin synthase (335 aa).

In terms of domain architecture, Radical SAM core spans 51–278 (NTVQLSSLLS…LAKVRLSAGR (228 aa)). The [4Fe-4S] cluster site is built by C66, C70, and C73. Residues C110, C141, C201, and R273 each coordinate [2Fe-2S] cluster.

This sequence belongs to the radical SAM superfamily. Biotin synthase family. As to quaternary structure, homodimer. [4Fe-4S] cluster serves as cofactor. It depends on [2Fe-2S] cluster as a cofactor.

It carries out the reaction (4R,5S)-dethiobiotin + (sulfur carrier)-SH + 2 reduced [2Fe-2S]-[ferredoxin] + 2 S-adenosyl-L-methionine = (sulfur carrier)-H + biotin + 2 5'-deoxyadenosine + 2 L-methionine + 2 oxidized [2Fe-2S]-[ferredoxin]. It participates in cofactor biosynthesis; biotin biosynthesis; biotin from 7,8-diaminononanoate: step 2/2. Functionally, catalyzes the conversion of dethiobiotin (DTB) to biotin by the insertion of a sulfur atom into dethiobiotin via a radical-based mechanism. The chain is Biotin synthase from Bordetella pertussis (strain Tohama I / ATCC BAA-589 / NCTC 13251).